The following is a 604-amino-acid chain: Sulfite reductase [NADPH] flavoprotein alpha-component (604 aa).

The region spanning 65-203 (VTILYGSQTG…AAGQWHADVL (139 aa)) is the Flavodoxin-like domain. FMN-binding positions include 71-76 (SQTGNG), 118-121 (STHG), and 154-163 (LGDSSYEFFC). The 218-residue stretch at 236–453 (QNPYSAEVLV…VEPNKHFRLP (218 aa)) folds into the FAD-binding FR-type domain. Residues threonine 324, leucine 358, 392–395 (RLYS), 410–412 (TVA), and 425–428 (GGAS) each bind FAD. NADP(+)-binding positions include 524–525 (SR), 530–534 (KIYVQ), and aspartate 566. Tyrosine 604 serves as a coordination point for FAD.

It belongs to the NADPH-dependent sulphite reductase flavoprotein subunit CysJ family. The protein in the N-terminal section; belongs to the flavodoxin family. In the C-terminal section; belongs to the flavoprotein pyridine nucleotide cytochrome reductase family. In terms of assembly, alpha(8)-beta(8). The alpha component is a flavoprotein, the beta component is a hemoprotein. Requires FAD as cofactor. The cofactor is FMN.

The enzyme catalyses hydrogen sulfide + 3 NADP(+) + 3 H2O = sulfite + 3 NADPH + 4 H(+). Its pathway is sulfur metabolism; hydrogen sulfide biosynthesis; hydrogen sulfide from sulfite (NADPH route): step 1/1. Its function is as follows. Component of the sulfite reductase complex that catalyzes the 6-electron reduction of sulfite to sulfide. This is one of several activities required for the biosynthesis of L-cysteine from sulfate. The flavoprotein component catalyzes the electron flow from NADPH -&gt; FAD -&gt; FMN to the hemoprotein component. This Shewanella sp. (strain ANA-3) protein is Sulfite reductase [NADPH] flavoprotein alpha-component.